The sequence spans 79 residues: Cyclin-dependent kinases regulatory subunit 2 (79 aa).

Position 4 is an N6-acetyllysine (Lys-4).

The protein belongs to the CKS family. In terms of assembly, forms a homohexamer that can probably bind six kinase subunits.

In terms of biological role, binds to the catalytic subunit of the cyclin dependent kinases and is essential for their biological function. The protein is Cyclin-dependent kinases regulatory subunit 2 (CKS2) of Bos taurus (Bovine).